The following is a 158-amino-acid chain: Mitotic-spindle organizing protein 2B (158 aa).

Serine 34 bears the Phosphoserine mark. The segment at 84 to 158 (RLASEPQDPA…PGKSPTRGST (75 aa)) is disordered. Low complexity predominate over residues 111–122 (GSAALGGALALA). Over residues 128 to 140 (EGSSQRMPRQPSA) the composition is skewed to polar residues. Serine 152 is subject to Phosphoserine.

This sequence belongs to the MOZART2 family. As to quaternary structure, associates with the gamma-tubulin ring complex (gTuRC) consisting of TUBGCP2, TUBGCP3, TUBGCP4, TUBGCP5 and TUBGCP6 and gamma-tubulin TUBG1 or TUBG2; within the complex, interacts with TUBGCP2; the interaction plays a role in gTuRC activation. Interacts with TUBG1.

Its subcellular location is the cytoplasm. The protein resides in the cytoskeleton. It is found in the microtubule organizing center. The protein localises to the centrosome. It localises to the spindle. Required for the recruitment and the assembly of the gamma-tubulin ring complex (gTuRC) at the centrosome. The gTuRC regulates the minus-end nucleation of alpha-beta tubulin heterodimers that grow into microtubule protafilaments, a critical step in centrosome duplication and spindle formation. This chain is Mitotic-spindle organizing protein 2B (MZT2B), found in Homo sapiens (Human).